We begin with the raw amino-acid sequence, 365 residues long: AP2/ERF and B3 domain-containing protein Os01g0141000 (365 aa).

The tract at residues 1 to 24 (MGVVSFSSTSSGASTATTESGGAV) is disordered. Positions 68-123 (RYKGVVPQPNGRWGAQIYERHARVWLGTFPDEEAAARAYDVAALRYRGRDAATNFP) form a DNA-binding region, AP2/ERF. A DNA-binding region (TF-B3) is located at residues 182–294 (FEKAVTPSDV…KLLFIDCKKN (113 aa)).

It is found in the nucleus. The polypeptide is AP2/ERF and B3 domain-containing protein Os01g0141000 (Oryza sativa subsp. japonica (Rice)).